We begin with the raw amino-acid sequence, 78 residues long: Translational regulator CsrA (78 aa).

It belongs to the CsrA/RsmA family. In terms of assembly, homodimer; the beta-strands of each monomer intercalate to form a hydrophobic core, while the alpha-helices form wings that extend away from the core.

It localises to the cytoplasm. Its function is as follows. A translational regulator that binds mRNA to regulate translation initiation and/or mRNA stability. Usually binds in the 5'-UTR at or near the Shine-Dalgarno sequence preventing ribosome-binding, thus repressing translation. Its main target seems to be the major flagellin gene, while its function is anatagonized by FliW. This chain is Translational regulator CsrA, found in Natranaerobius thermophilus (strain ATCC BAA-1301 / DSM 18059 / JW/NM-WN-LF).